The sequence spans 241 residues: Small ribosomal subunit protein uS3 (241 aa).

In terms of domain architecture, KH type-2 spans 39–109 (IRQYITKNLS…QIRINVIEVQ (71 aa)). Positions 214–241 (EEIPMPVPSQTPRRQRRRQQFEDRSGEE) are disordered. Over residues 232-241 (QQFEDRSGEE) the composition is skewed to basic and acidic residues.

The protein belongs to the universal ribosomal protein uS3 family. In terms of assembly, part of the 30S ribosomal subunit. Forms a tight complex with proteins S10 and S14.

Binds the lower part of the 30S subunit head. Binds mRNA in the 70S ribosome, positioning it for translation. The chain is Small ribosomal subunit protein uS3 from Rippkaea orientalis (strain PCC 8801 / RF-1) (Cyanothece sp. (strain PCC 8801)).